A 460-amino-acid polypeptide reads, in one-letter code: Transcriptional regulatory protein UME1 (460 aa).

The NEE-box motif lies at 14 to 22 (NEEFKIWKK). WD repeat units follow at residues 233-271 (PGIK…KPLW), 276-316 (SLDG…ALGD), 339-379 (FYSE…AIYN), and 411-451 (GENN…VLDG).

In terms of assembly, component of the RPD3C(L) complex composed of at least ASH1, CTI6, DEP1, PHO23, RPD3, RXT2, RXT3, SAP30, SDS3, SIN3, UME1 and UME6. Component of the RPD3C(S) complex composed of at least EAF3, RCO1, RPD3, SIN3, and UME1. Interacts with RPD3.

It localises to the cytoplasm. The protein resides in the nucleus. Its function is as follows. Catalytic component of the RPD3 histone deacetylase complexes RPD3C(L) and RPD3C(S) responsible for the deacetylation of lysine residues on the N-terminal part of the core histones (H2A, H2B, H3 and H4). Histone deacetylation gives a tag for epigenetic repression and plays an important role in transcriptional regulation, cell cycle progression and developmental events. The protein is Transcriptional regulatory protein UME1 (UME1) of Saccharomyces cerevisiae (strain ATCC 204508 / S288c) (Baker's yeast).